We begin with the raw amino-acid sequence, 353 residues long: S-adenosylmethionine decarboxylase proenzyme (353 aa).

Active-site residues include Glu-9 and Glu-12. The Schiff-base intermediate with substrate; via pyruvic acid role is filled by Ser-69. Pyruvic acid (Ser); by autocatalysis is present on Ser-69. Cys-83 functions as the Proton donor; for catalytic activity in the catalytic mechanism. Residues Ser-232 and His-245 each act as proton acceptor; for processing activity in the active site.

It belongs to the eukaryotic AdoMetDC family. The cofactor is pyruvate. Post-translationally, is synthesized initially as an inactive proenzyme. Formation of the active enzyme involves a self-maturation process in which the active site pyruvoyl group is generated from an internal serine residue via an autocatalytic post-translational modification. Two non-identical subunits are generated from the proenzyme in this reaction, and the pyruvate is formed at the N-terminus of the alpha chain, which is derived from the carboxyl end of the proenzyme. The post-translation cleavage follows an unusual pathway, termed non-hydrolytic serinolysis, in which the side chain hydroxyl group of the serine supplies its oxygen atom to form the C-terminus of the beta chain, while the remainder of the serine residue undergoes an oxidative deamination to produce ammonia and the pyruvoyl group blocking the N-terminus of the alpha chain.

The catalysed reaction is S-adenosyl-L-methionine + H(+) = S-adenosyl 3-(methylsulfanyl)propylamine + CO2. It functions in the pathway amine and polyamine biosynthesis; S-adenosylmethioninamine biosynthesis; S-adenosylmethioninamine from S-adenosyl-L-methionine: step 1/1. This is S-adenosylmethionine decarboxylase proenzyme (SAMDC) from Vicia faba (Broad bean).